A 391-amino-acid polypeptide reads, in one-letter code: Terminal nucleotidyltransferase 5C (391 aa).

The protein belongs to the TENT family. As to quaternary structure, interacts with BCCIP and PABPC1; the interaction has no effect on TENT5C poly(A) polymerase function. Interacts with PLK4; this interaction leads to the TENT5C recruitment into the centrosome. In terms of tissue distribution, expressed by splenocytes, expression is increased in activated splenocytes.

It is found in the nucleus. Its subcellular location is the cytoplasm. It localises to the cytoskeleton. The protein resides in the microtubule organizing center. The protein localises to the centrosome. It catalyses the reaction RNA(n) + ATP = RNA(n)-3'-adenine ribonucleotide + diphosphate. Functionally, catalyzes the transfer of one adenosine molecule from an ATP to an mRNA poly(A) tail bearing a 3'-OH terminal group and enhances mRNA stability and gene expression. Can also elongate RNA oligos ending with uridine molecule, provided that the sequence is adenosine-rich. Mainly targets mRNAs encoding endoplasmic reticulum-targeted protein. The protein is Terminal nucleotidyltransferase 5C of Mus musculus (Mouse).